The primary structure comprises 388 residues: Diacylglycerol O-acyltransferase 2 (388 aa).

Residues Met-1 to Gln-69 are Cytoplasmic-facing. A helical membrane pass occupies residues Val-70–Ser-88. The Lumenal portion of the chain corresponds to Val-89–Met-92. The chain crosses the membrane as a helical span at residues Tyr-93–Phe-112. Over Asp-113–Asn-388 the chain is Cytoplasmic.

It belongs to the diacylglycerol acyltransferase family. Forms multimeric complexes consisting of several DGAT2 subunits. Interacts with SLC27A1 and this interaction is enhanced in the presence of ZFYVE1. In terms of tissue distribution, predominantly expressed in liver. Also expressed in testis.

Its subcellular location is the endoplasmic reticulum membrane. It localises to the lipid droplet. It is found in the cytoplasm. The protein resides in the perinuclear region. The enzyme catalyses an acyl-CoA + a 1,2-diacyl-sn-glycerol = a triacyl-sn-glycerol + CoA. It catalyses the reaction all-trans-retinol + an acyl-CoA = an all-trans-retinyl ester + CoA. It carries out the reaction 1,2-di-(9Z-octadecenoyl)-sn-glycerol + hexadecanoyl-CoA = 1,2-di-(9Z)-octadecenoyl-3-hexadecanoyl-sn-glycerol + CoA. The catalysed reaction is 1,2-di-(9Z-octadecenoyl)-sn-glycerol + (9Z)-octadecenoyl-CoA = 1,2,3-tri-(9Z-octadecenoyl)-glycerol + CoA. The enzyme catalyses 1,3-di-(9Z-octadecenoyl)-glycerol + (9Z)-octadecenoyl-CoA = 1,2,3-tri-(9Z-octadecenoyl)-glycerol + CoA. It catalyses the reaction 2,3-di-(9Z)-octadecenoyl-sn-glycerol + (9Z)-octadecenoyl-CoA = 1,2,3-tri-(9Z-octadecenoyl)-glycerol + CoA. It carries out the reaction 2-(9Z-octadecenoyl)-glycerol + hexadecanoyl-CoA = 1-hexadecanoyl-2-(9Z-octadecenoyl)-sn-glycerol + CoA. The catalysed reaction is 2-(9Z-octadecenoyl)-glycerol + (9Z)-octadecenoyl-CoA = 1,2-di-(9Z-octadecenoyl)-sn-glycerol + CoA. The enzyme catalyses all-trans-retinol + hexadecanoyl-CoA = all-trans-retinyl hexadecanoate + CoA. It catalyses the reaction 1-O-(9Z-octadecenyl)-glycerol + (9Z)-octadecenoyl-CoA = 1-O-(9Z-octadecyl)-3-(9Z-octadecenoyl)-glycerol + CoA. It carries out the reaction 1-(9Z-octadecenoyl)-glycerol + (9Z)-octadecenoyl-CoA = 1,2-di-(9Z-octadecenoyl)-glycerol + CoA. It functions in the pathway glycerolipid metabolism; triacylglycerol biosynthesis. With respect to regulation, inhibited by niacin. Functionally, essential acyltransferase that catalyzes the terminal and only committed step in triacylglycerol synthesis by using diacylglycerol and fatty acyl CoA as substrates. Required for synthesis and storage of intracellular triglycerides. Probably plays a central role in cytosolic lipid accumulation. In liver, is primarily responsible for incorporating endogenously synthesized fatty acids into triglycerides. Also functions as an acyl-CoA retinol acyltransferase (ARAT). Also able to use 1-monoalkylglycerol (1-MAkG) as an acyl acceptor for the synthesis of monoalkyl-monoacylglycerol (MAMAG). The protein is Diacylglycerol O-acyltransferase 2 of Mus musculus (Mouse).